Consider the following 225-residue polypeptide: Protein-L-isoaspartate O-methyltransferase (225 aa).

Ser75 is a catalytic residue.

It belongs to the methyltransferase superfamily. L-isoaspartyl/D-aspartyl protein methyltransferase family.

The protein localises to the cytoplasm. The catalysed reaction is [protein]-L-isoaspartate + S-adenosyl-L-methionine = [protein]-L-isoaspartate alpha-methyl ester + S-adenosyl-L-homocysteine. Catalyzes the methyl esterification of L-isoaspartyl residues in peptides and proteins that result from spontaneous decomposition of normal L-aspartyl and L-asparaginyl residues. It plays a role in the repair and/or degradation of damaged proteins. This Xanthomonas euvesicatoria pv. vesicatoria (strain 85-10) (Xanthomonas campestris pv. vesicatoria) protein is Protein-L-isoaspartate O-methyltransferase.